The primary structure comprises 632 residues: Cell pattern formation-associated protein stuA (632 aa).

Polar residues predominate over residues 1-20 (MNQTQSYMDVHTSHFSSPQP). Residues 1 to 27 (MNQTQSYMDVHTSHFSSPQPYGSHGAT) are disordered. The HTH APSES-type domain occupies 128–234 (RVTATLWEDE…HNIGGLLYHP (107 aa)). Positions 162–183 (GTKLLNVAGMTRGRRDGILKSE) form a DNA-binding region, H-T-H motif. Disordered regions lie at residues 246–315 (DSQQ…ASSL), 340–386 (QNVP…KSYY), 403–460 (AHSL…QQEP), and 473–632 (NRNS…MRRR). 4 stretches are compositionally biased toward polar residues: residues 254–264 (GSQTARTSQGP), 275–295 (MNGS…QTNG), 340–354 (QNVP…TRSM), and 364–376 (GNNL…YQNQ). A compositionally biased stretch (low complexity) spans 377–386 (PAYDSSKSYY). The span at 428 to 438 (EQEHDEVKVDR) shows a compositional bias: basic and acidic residues. A compositionally biased stretch (polar residues) spans 473–506 (NRNSYTYTTNPSVSSLSGDHSQLGGSPSHQNGSD). The segment covering 558–576 (AYASNYSGYSSVNGSSMGS) has biased composition (low complexity). The interval 578-604 (KRMRDDDDDHLSRSDGRENEYETKRRK) is nuclear localization domain. Basic and acidic residues predominate over residues 579 to 600 (RMRDDDDDHLSRSDGRENEYET).

The protein belongs to the EFG1/PHD1/stuA family.

The protein localises to the nucleus. In terms of biological role, transcription factor that regulates asexual reproduction. Binds the StuA-response elements (StRE) with the consensus sequence 5'-(A/T)CGCG(T/A)N(A/C)-3' at the promoters of target genes. Required for accurate spatial organization of the developing conidiophore. Primarily involved in the formation of the uninucleate sterigmata, which arise by budding in this multicellular structure. Required for metula and phialide formation during conidiation but is not required for dimorphic growth. The chain is Cell pattern formation-associated protein stuA from Talaromyces marneffei (Penicillium marneffei).